The sequence spans 113 residues: Putative pterin-4-alpha-carbinolamine dehydratase (113 aa).

Belongs to the pterin-4-alpha-carbinolamine dehydratase family.

The catalysed reaction is (4aS,6R)-4a-hydroxy-L-erythro-5,6,7,8-tetrahydrobiopterin = (6R)-L-erythro-6,7-dihydrobiopterin + H2O. This chain is Putative pterin-4-alpha-carbinolamine dehydratase, found in Legionella pneumophila (strain Lens).